An 863-amino-acid polypeptide reads, in one-letter code: Alanine--tRNA ligase (863 aa).

Zn(2+)-binding residues include His552, His556, Cys654, and His658.

The protein belongs to the class-II aminoacyl-tRNA synthetase family. The cofactor is Zn(2+).

The protein localises to the cytoplasm. It carries out the reaction tRNA(Ala) + L-alanine + ATP = L-alanyl-tRNA(Ala) + AMP + diphosphate. Functionally, catalyzes the attachment of alanine to tRNA(Ala) in a two-step reaction: alanine is first activated by ATP to form Ala-AMP and then transferred to the acceptor end of tRNA(Ala). Also edits incorrectly charged Ser-tRNA(Ala) and Gly-tRNA(Ala) via its editing domain. The polypeptide is Alanine--tRNA ligase (Nitrosomonas europaea (strain ATCC 19718 / CIP 103999 / KCTC 2705 / NBRC 14298)).